A 360-amino-acid polypeptide reads, in one-letter code: DNA replication and repair protein RecF (360 aa).

Glycine 30–threonine 37 contacts ATP.

The protein belongs to the RecF family.

It localises to the cytoplasm. Functionally, the RecF protein is involved in DNA metabolism; it is required for DNA replication and normal SOS inducibility. RecF binds preferentially to single-stranded, linear DNA. It also seems to bind ATP. This Shewanella sp. (strain W3-18-1) protein is DNA replication and repair protein RecF.